We begin with the raw amino-acid sequence, 276 residues long: Radial spoke head protein 9 homolog (276 aa).

Belongs to the flagellar radial spoke RSP9 family. Component of the axonemal radial spoke 1 (RS1) and 2 (RS2) complexes, at least composed of spoke head proteins RSPH1, RSPH3, RSPH9 and the cilia-specific component RSPH4A or sperm-specific component RSPH6A, spoke stalk proteins RSPH14, DNAJB13, DYDC1, ROPN1L and NME5, and the RS1 complex-specific anchor protein IQUB. Interacts with IQUB. Interacts with RSPH3B. Interacts with RSPH4A. Interacts with RSPH6A. Interacts with CFAP61. Interacts with LRRC23.

It is found in the cytoplasm. Its subcellular location is the cytoskeleton. The protein localises to the cilium axoneme. It localises to the flagellum axoneme. The protein resides in the cell projection. It is found in the kinocilium. Functions as part of axonemal radial spoke complexes that play an important part in the motility of sperm and cilia. Essential for both the radial spoke head assembly and the central pair microtubule stability in ependymal motile cilia. Required for motility of olfactory and neural cilia and for the structural integrity of ciliary axonemes in both 9+0 and 9+2 motile cilia. The chain is Radial spoke head protein 9 homolog (RSPH9) from Bos taurus (Bovine).